The sequence spans 654 residues: Carboxypeptidase Z (654 aa).

Residues 1-20 (MPTMPLLLAALAALAVLALA) form the signal peptide. The region spanning 43–165 (THSATCVDLH…APEEEGCYDP (123 aa)) is the FZ domain. 5 cysteine pairs are disulfide-bonded: Cys-48–Cys-114, Cys-56–Cys-107, Cys-98–Cys-134, Cys-123–Cys-162, and Cys-127–Cys-151. A glycan (N-linked (GlcNAc...) asparagine) is linked at Asn-62. Positions 191–507 (AHHSYAQMVR…EPLLNFLEMV (317 aa)) constitute a Peptidase M14 domain. Zn(2+) contacts are provided by His-253 and Glu-256. Asn-286 carries an N-linked (GlcNAc...) asparagine glycan. His-385 lines the Zn(2+) pocket. The active-site Proton donor/acceptor is the Glu-477. The interval 596–630 (FLPGPSRALPRFQDPQREPTQMDFEPPRARRQPAS) is disordered.

This sequence belongs to the peptidase M14 family. The cofactor is Zn(2+).

It is found in the secreted. Its subcellular location is the extracellular space. The protein resides in the extracellular matrix. Its activity is regulated as follows. Inhibited by 2-mercaptomethyl-3-guanidinoethylthiopropanoic acid (MGTA) and guanidinoethylmercaptosuccinic acid (GEMSA). Inhibited by chelating agents such as EDTA and EGTA. Cleaves substrates with C-terminal arginine residues. Probably modulates the Wnt signaling pathway, by cleaving some undefined protein. May play a role in cleavage during prohormone processing. This is Carboxypeptidase Z (Cpz) from Mus musculus (Mouse).